We begin with the raw amino-acid sequence, 488 residues long: MARRNFKVLYVSGESSPFVRVSSLADYMASFPQALEEEGFEARIMMPKYGIINDRKFRLHDVLRLSDIEVPLKDKTDMLHIKVTALPSSKIQTYFLYNEKYFKRYGLFSDISLGGDHKGSAERIIFFSVGVMETLVRLGWQPDIIHCHDWHAGLVALLAKTRYAKHDFFKKVKVVQTIHNVYRQGVFPSKAFQKHLDPEVCDALDMEGGEVNLLATGIKHADLVTTTSDRYARQLLDDPELSFGMDKALKACGDRFHGILNGMDTRQWNPSSDKLIKKRYSAEQPEMKLEDKKVLLEEVGLPFSEETPVVGVIGSFDQYQGAEIVKASLAKLLELDIQLIVFGSGDKEFDQALKETAEENEEKMAFRPEFTDAFYHQMIAGLDILLMTSRIEACGMMQMFAMNYGTVPVAYAGGGIVDTIEEVSGDKGTGFIFTDYTPEALTAKLQEALALFANRERWSALMLECMGRDFSWSTSAGQYAELYRNLLG.

ADP-alpha-D-glucose is bound at residue Arg20.

The protein belongs to the glycosyltransferase 1 family. Bacterial/plant glycogen synthase subfamily.

The enzyme catalyses [(1-&gt;4)-alpha-D-glucosyl](n) + ADP-alpha-D-glucose = [(1-&gt;4)-alpha-D-glucosyl](n+1) + ADP + H(+). Its pathway is glycan biosynthesis; glycogen biosynthesis. Its function is as follows. Synthesizes alpha-1,4-glucan chains using ADP-glucose. This chain is Glycogen synthase, found in Chlorobaculum tepidum (strain ATCC 49652 / DSM 12025 / NBRC 103806 / TLS) (Chlorobium tepidum).